The chain runs to 198 residues: UDP-N-acetylglucosamine transferase subunit ALG13 (198 aa).

This sequence belongs to the glycosyltransferase 28 family. In terms of assembly, heterodimer with ALG14 to form a functional enzyme.

The protein resides in the endoplasmic reticulum. It carries out the reaction an N-acetyl-alpha-D-glucosaminyl-diphospho-di-trans,poly-cis-dolichol + UDP-N-acetyl-alpha-D-glucosamine = an N,N'-diacetylchitobiosyl-diphospho-di-trans,poly-cis-dolichol + UDP + H(+). Involved in protein N-glycosylation. Essential for the second step of the dolichol-linked oligosaccharide pathway. The sequence is that of UDP-N-acetylglucosamine transferase subunit ALG13 (ALG13) from Candida glabrata (strain ATCC 2001 / BCRC 20586 / JCM 3761 / NBRC 0622 / NRRL Y-65 / CBS 138) (Yeast).